The following is a 513-amino-acid chain: Glycogen synthase (513 aa).

K47 provides a ligand contact to ADP-alpha-D-glucose.

Belongs to the glycosyltransferase 1 family. Bacterial/plant glycogen synthase subfamily.

It catalyses the reaction [(1-&gt;4)-alpha-D-glucosyl](n) + ADP-alpha-D-glucose = [(1-&gt;4)-alpha-D-glucosyl](n+1) + ADP + H(+). The protein operates within glycan biosynthesis; glycogen biosynthesis. Synthesizes alpha-1,4-glucan chains using ADP-glucose. The protein is Glycogen synthase of Pseudomonas aeruginosa (strain ATCC 15692 / DSM 22644 / CIP 104116 / JCM 14847 / LMG 12228 / 1C / PRS 101 / PAO1).